A 130-amino-acid polypeptide reads, in one-letter code: Small ribosomal subunit protein uS9 (130 aa).

Belongs to the universal ribosomal protein uS9 family.

The protein is Small ribosomal subunit protein uS9 of Vibrio cholerae serotype O1 (strain ATCC 39541 / Classical Ogawa 395 / O395).